The sequence spans 356 residues: D-amino-acid oxidase (356 aa).

An N-terminal signal peptide occupies residues 1–17 (MAKIVVIGAGVAGLTTA). The FAD site is built by alanine 9, serine 44, glycine 48, and asparagine 50. Anthranilate is bound at residue phenylalanine 54. An FAD-binding site is contributed by valine 171. An N-linked (GlcNAc...) asparagine glycan is attached at asparagine 192. Tyrosine 243 provides a ligand contact to anthranilate. Tyrosine 243 is a binding site for (R)-lactate. An N-linked (GlcNAc...) asparagine glycan is attached at asparagine 262. FAD contacts are provided by arginine 302, alanine 329, glycine 332, tyrosine 333, and glutamine 334. Residue arginine 302 participates in anthranilate binding. Arginine 302 is a (R)-lactate binding site.

The protein belongs to the DAMOX/DASOX family. FAD serves as cofactor.

The protein localises to the peroxisome matrix. It catalyses the reaction a D-alpha-amino acid + O2 + H2O = a 2-oxocarboxylate + H2O2 + NH4(+). The enzyme catalyses D-alanine + O2 + H2O = pyruvate + H2O2 + NH4(+). It carries out the reaction D-serine + O2 + H2O = 3-hydroxypyruvate + H2O2 + NH4(+). The catalysed reaction is D-phenylalanine + O2 + H2O = 3-phenylpyruvate + H2O2 + NH4(+). It catalyses the reaction D-lysine + O2 + H2O = 6-amino-2-oxohexanoate + H2O2 + NH4(+). The enzyme catalyses D-tyrosine + O2 + H2O = 3-(4-hydroxyphenyl)pyruvate + H2O2 + NH4(+). It carries out the reaction D-methionine + O2 + H2O = 4-methylsulfanyl-2-oxobutanoate + H2O2 + NH4(+). The catalysed reaction is D-tryptophan + O2 + H2O = indole-3-pyruvate + H2O2 + NH4(+). It catalyses the reaction D-leucine + O2 + H2O = 4-methyl-2-oxopentanoate + H2O2 + NH4(+). The enzyme catalyses D-valine + O2 + H2O = 3-methyl-2-oxobutanoate + H2O2 + NH4(+). Inhibited by benzoate and hypochlorite. Functionally, catalyzes the oxidative deamination of D-amino acids with broad substrate specificity. Enables the organism to utilize D-amino acids as a source of nutrients. In Trigonopsis variabilis (Yeast), this protein is D-amino-acid oxidase.